The primary structure comprises 176 residues: NAD(P)H-quinone oxidoreductase subunit 6, chloroplastic (176 aa).

The next 5 membrane-spanning stretches (helical) occupy residues 10–30 (FLLV…VLLA), 32–52 (PIYS…FYIL), 61–81 (AQLL…VMFI), 92–112 (LWTV…VSLI), and 152–172 (FFIP…GAIA).

Belongs to the complex I subunit 6 family. As to quaternary structure, NDH is composed of at least 16 different subunits, 5 of which are encoded in the nucleus.

It is found in the plastid. Its subcellular location is the chloroplast thylakoid membrane. It carries out the reaction a plastoquinone + NADH + (n+1) H(+)(in) = a plastoquinol + NAD(+) + n H(+)(out). The enzyme catalyses a plastoquinone + NADPH + (n+1) H(+)(in) = a plastoquinol + NADP(+) + n H(+)(out). NDH shuttles electrons from NAD(P)H:plastoquinone, via FMN and iron-sulfur (Fe-S) centers, to quinones in the photosynthetic chain and possibly in a chloroplast respiratory chain. The immediate electron acceptor for the enzyme in this species is believed to be plastoquinone. Couples the redox reaction to proton translocation, and thus conserves the redox energy in a proton gradient. This chain is NAD(P)H-quinone oxidoreductase subunit 6, chloroplastic (ndhG), found in Helianthus annuus (Common sunflower).